A 209-amino-acid chain; its full sequence is Transcription factor atf31 (209 aa).

A compositionally biased stretch (polar residues) spans 90–103 (SKSPSIISEASHNS). Positions 90-133 (SKSPSIISEASHNSPSRELDDSGDENTSKLTGTKQSMLKARNRQ) are disordered. The bZIP domain occupies 121 to 184 (GTKQSMLKAR…IKLRTLVFAH (64 aa)). The interval 123-161 (KQSMLKARNRQAAQKCRIKKKKYLQTLQDQVNYYTSENK) is basic motif. The leucine-zipper stretch occupies residues 163-177 (LLQSANDLREEIIKL).

Belongs to the bZIP family.

The protein localises to the nucleus. This is Transcription factor atf31 (atf31) from Schizosaccharomyces pombe (strain 972 / ATCC 24843) (Fission yeast).